The following is a 159-amino-acid chain: MQITIITVGKLKEKYLKQGIAEYTKRLGAYCSIQEIEVPDEKAPEQLSDAEMQQVKKKEGERILAKIGPDVHVYALAIEGKQRTSEQFATELDRLATYGKSKIAFVIGGSLGLAPEVMQRANDTISFSKMTFPHQLMKMILCEQIYRAYRINRNEPYHK.

S-adenosyl-L-methionine is bound by residues Leu76, Gly108, and 127 to 132 (FSKMTF).

This sequence belongs to the RNA methyltransferase RlmH family. As to quaternary structure, homodimer.

The protein resides in the cytoplasm. The enzyme catalyses pseudouridine(1915) in 23S rRNA + S-adenosyl-L-methionine = N(3)-methylpseudouridine(1915) in 23S rRNA + S-adenosyl-L-homocysteine + H(+). Specifically methylates the pseudouridine at position 1915 (m3Psi1915) in 23S rRNA. The chain is Ribosomal RNA large subunit methyltransferase H from Exiguobacterium sibiricum (strain DSM 17290 / CCUG 55495 / CIP 109462 / JCM 13490 / 255-15).